Consider the following 1279-residue polypeptide: Mediator of DNA damage checkpoint protein 1 (1279 aa).

Residues 1–22 are disordered; the sequence is MENTQVIDWDAEEEEETEISSG. The segment at 1–150 is interaction with CHEK2; the sequence is MENTQVIDWD…PRSLLTIEKT (150 aa). Positions 2-222 are interaction with the MRN complex; it reads ENTQVIDWDA…SSPFGLGSDT (221 aa). Thr-4 is subject to Phosphothreonine. Over residues 9-18 the composition is skewed to acidic residues; that stretch reads WDAEEEEETE. Residues 54 to 105 form the FHA domain; sequence NVVGRSPDCSVALPFPSISKQHAVIEISAWNKAPILQDCGSLNGTQIVKPPR. At Thr-146 the chain carries Phosphothreonine. 3 disordered regions span residues 156–394, 409–634, and 714–744; these read RSQN…EEVS, LWSG…KHAK, and ETSE…PVPT. Phosphoserine occurs at positions 168 and 176. A compositionally biased stretch (polar residues) spans 179–192; the sequence is SVANGSRNTASPSA. Residues Ser-198 and Ser-220 each carry the phosphoserine modification. Thr-222 is modified (phosphothreonine). Positions 264–277 are enriched in basic and acidic residues; that stretch reads TKDKFKDTKMKEEA. The segment covering 278–292 has biased composition (low complexity); that stretch reads GSAGVPVGSVVEGSP. Position 298 is a phosphoserine (Ser-298). Residue Thr-300 is modified to Phosphothreonine. Ser-314 is subject to Phosphoserine. Thr-316 is modified (phosphothreonine). A phosphoserine mark is found at Ser-350 and Ser-354. Thr-356 is modified (phosphothreonine). Ser-372 and Ser-380 each carry phosphoserine. The span at 381–393 shows a compositional bias: acidic residues; sequence DTDEEERGEEEEV. At Thr-382 the chain carries Phosphothreonine. Ser-394, Ser-411, Ser-421, Ser-434, and Ser-438 each carry phosphoserine. The span at 421 to 435 shows a compositional bias: polar residues; it reads SQPQVLVERSQSASG. At Thr-440 the chain carries Phosphothreonine. The residue at position 457 (Ser-457) is a Phosphoserine. At Thr-466 the chain carries Phosphothreonine. 5 positions are modified to phosphoserine: Ser-488, Ser-489, Ser-550, Ser-587, and Ser-589. Polar residues predominate over residues 545–561; that stretch reads QEGSSSPVADIRMSQQP. Positions 620–634 are enriched in basic and acidic residues; it reads GREREAHVGGTKHAK. A phosphoserine mark is found at Ser-730 and Ser-745. The residue at position 764 (Lys-764) is an N6-acetyllysine. The interval 772 to 1086 is disordered; that stretch reads QMMPDGKASG…TKPNQEAAAP (315 aa). Ser-793, Ser-801, and Ser-824 each carry phosphoserine. Over residues 798–817 the composition is skewed to low complexity; that stretch reads ASASPQSLLTSQSQKQSTPQ. 3 stretches are compositionally biased toward polar residues: residues 862 to 889, 901 to 929, and 942 to 956; these read TCPT…STRT, QPST…TSVN, and PLTS…NLNP. Thr-889 carries the post-translational modification Phosphothreonine. Thr-951 carries the phosphothreonine modification. Residue Lys-991 forms a Glycyl lysine isopeptide (Lys-Gly) (interchain with G-Cter in SUMO2) linkage. Positions 994 to 1014 are enriched in low complexity; it reads STPAEPEPQSSASQSSGASEA. 4 positions are modified to phosphoserine: Ser-1008, Ser-1009, Ser-1012, and Ser-1016. Over residues 1032–1047 the composition is skewed to basic and acidic residues; that stretch reads VVKEEDPGEIQVKEEP. Lys-1034 participates in a covalent cross-link: Glycyl lysine isopeptide (Lys-Gly) (interchain with G-Cter in SUMO1); alternate. Residue Lys-1034 forms a Glycyl lysine isopeptide (Lys-Gly) (interchain with G-Cter in SUMO2); alternate linkage. At Thr-1054 the chain carries Phosphothreonine. 2 consecutive BRCT domains span residues 1085–1163 and 1184–1275; these read APKV…DYLV and RERR…FVLS.

Homodimer. Interacts with H2AX, which requires phosphorylation of H2AX on 'Ser-139'. Interacts with the MRN complex, composed of MRE11, RAD50, and NBN. Interacts with CHEK2, which requires ATM-mediated phosphorylation of 'Thr-68' within the FHA domain of CHEK2. Interacts constitutively with the BRCA1-BARD1 complex, SMC1A and TP53BP1. Interacts with ATM and FANCD2, and these interactions are reduced upon DNA damage. Also interacts with the PRKDC complex, composed of XRCC6/KU70, XRCC5/KU80 and PRKDC/XRCC7. This interaction may be required for PRKDC autophosphorylation, which is essential for DNA double strand break (DSB) repair. When phosphorylated by ATM, interacts with RNF8 (via FHA domain). Interacts with CEP164. When phosphorylated, interacts with APTX (via FHA-like domain). Interacts (when phosphorylated) with TOPBP1; promoting TOPBP1 localization to DNA damage sites during mitosis. Interacts (when phosphorylated) with NBN; promoting NBN and MRN complex localization to DNA damage sites. Post-translationally, phosphorylated upon exposure to ionizing radiation (IR), ultraviolet radiation (UV), and hydroxyurea (HU). Phosphorylation in response to IR requires ATM, NBN, and possibly CHEK2. Also phosphorylated during the G2/M phase of the cell cycle and during activation of the mitotic spindle checkpoint. Phosphorylation at Thr-4 by ATM stabilizes and enhances homodimerization via the FHA domain. Phosphorylated at Ser-168 and Ser-198 by CK2 in response to DNA damage during mitosis, promoting interaction with TOPBP1. Phosphorylated by CK2 in response to DNA damage, promoting interaction with NBN and recruitment of the MRN complex to DNA damage sites. Sumoylation at Lys-1034 by PIAS4 following DNA damage promotes ubiquitin-mediated degradation. In terms of processing, ubiquitinated by RNF4, leading to proteasomal degradation; undergoes 'Lys-48'-linked polyubiquitination.

It localises to the nucleus. The protein localises to the chromosome. Histone reader protein required for checkpoint-mediated cell cycle arrest in response to DNA damage within both the S phase and G2/M phases of the cell cycle. Specifically recognizes and binds histone H2AX phosphorylated at 'Ser-139', a marker of DNA damage, serving as a scaffold for the recruitment of DNA repair and signal transduction proteins to discrete foci of DNA damage sites. Also required for downstream events subsequent to the recruitment of these proteins. These include phosphorylation and activation of the ATM, CHEK1 and CHEK2 kinases, and stabilization of TP53/p53 and apoptosis. ATM and CHEK2 may also be activated independently by a parallel pathway mediated by TP53BP1. Required for chromosomal stability during mitosis by promoting recruitment of TOPBP1 to DNA double strand breaks (DSBs): TOPBP1 forms filamentous assemblies that bridge MDC1 and tether broken chromosomes during mitosis. Required for the repair of DSBs via homologous recombination by promoting recruitment of NBN component of the MRN complex to DSBs. This is Mediator of DNA damage checkpoint protein 1 (Mdc1) from Rattus norvegicus (Rat).